We begin with the raw amino-acid sequence, 637 residues long: Sodium-dependent proline transporter (637 aa).

The Cytoplasmic portion of the chain corresponds to 1–45 (MKKLQEAHLRKPVTPDLLMTPSDQGDVDLDVDFAADRGNWTGKLD). At Thr-20 the chain carries Phosphothreonine. The residue at position 22 (Ser-22) is a Phosphoserine. 3 consecutive transmembrane segments (helical) span residues 46-66 (FLLSCIGYCVGLGNVWRFPYR), 74-93 (AFLVPYFLMLAICGIPLFFL), and 117-137 (GAGAAMLLIVGLVAIYYNMII). The Extracellular portion of the chain corresponds to 138-214 (AYVLFYLFAS…QGIGRPGEIR (77 aa)). N-linked (GlcNAc...) asparagine glycosylation occurs at Asn-182. 9 consecutive transmembrane segments (helical) span residues 215 to 233 (WNLCLCLLLAWVIVFLCIL), 242 to 259 (VVYFTATFPYLILLMLLV), 295 to 312 (IFYSLGVGFGGLLTFASY), 324 to 345 (FIVTLGNAITSILAGFAIFSVL), 378 to 397 (LPLSPFWSFLFFFMLLTLGL), 425 to 443 (VFSGLICVAMYLMGLILTT), 459 to 479 (SFGLMVVVITTCLAVTRVYGI), 500 to 519 (ACWLFLSPATLLALLVYSIV), and 538 to 556 (LGILMGLLSCLMIPAGMLV). Over 557–637 (AVLREEGSLW…IAEEEEESMM (81 aa)) the chain is Cytoplasmic. Phosphoserine occurs at positions 573 and 582. Phosphothreonine is present on Thr-588. Tyr-591 carries the phosphotyrosine modification. Ser-598 and Ser-600 each carry phosphoserine.

Belongs to the sodium:neurotransmitter symporter (SNF) (TC 2.A.22) family. SLC6A7 subfamily. Expressed in subpopulations of putative glutamatergic pathways of rat brain.

The protein localises to the synaptic cell membrane. It carries out the reaction L-proline(out) + chloride(out) + 2 Na(+)(out) = L-proline(in) + chloride(in) + 2 Na(+)(in). The enzyme catalyses L-pipecolate(out) + chloride(out) + 2 Na(+)(out) = L-pipecolate(in) + chloride(in) + 2 Na(+)(in). Brain specific sodium (and chloride)-dependent proline transporter. Terminates the action of proline by its high affinity sodium-dependent reuptake into presynaptic terminals. The sequence is that of Sodium-dependent proline transporter (Slc6a7) from Rattus norvegicus (Rat).